A 448-amino-acid chain; its full sequence is Bifunctional protein GlmU (448 aa).

Residues 1 to 232 (MSERSLLVVV…VDEVAGVNSR (232 aa)) form a pyrophosphorylase region. UDP-N-acetyl-alpha-D-glucosamine is bound by residues 11-14 (LAAG), Lys-25, Gln-78, and 83-84 (GT). Asp-108 lines the Mg(2+) pocket. 4 residues coordinate UDP-N-acetyl-alpha-D-glucosamine: Gly-144, Glu-158, Asn-173, and Asn-230. Residue Asn-230 participates in Mg(2+) binding. Residues 233–253 (LQLAEAEAILQGRLRRAAMAG) form a linker region. The tract at residues 254-448 (GATLVAPETV…LRAARGKPKV (195 aa)) is N-acetyltransferase. Residues Arg-319 and Lys-337 each contribute to the UDP-N-acetyl-alpha-D-glucosamine site. The Proton acceptor role is filled by His-349. Tyr-352 and Asn-363 together coordinate UDP-N-acetyl-alpha-D-glucosamine. Residues Ala-366, 372–373 (NY), Ser-409, and Arg-426 each bind acetyl-CoA.

This sequence in the N-terminal section; belongs to the N-acetylglucosamine-1-phosphate uridyltransferase family. The protein in the C-terminal section; belongs to the transferase hexapeptide repeat family. As to quaternary structure, homotrimer. Mg(2+) serves as cofactor.

Its subcellular location is the cytoplasm. It carries out the reaction alpha-D-glucosamine 1-phosphate + acetyl-CoA = N-acetyl-alpha-D-glucosamine 1-phosphate + CoA + H(+). The catalysed reaction is N-acetyl-alpha-D-glucosamine 1-phosphate + UTP + H(+) = UDP-N-acetyl-alpha-D-glucosamine + diphosphate. It functions in the pathway nucleotide-sugar biosynthesis; UDP-N-acetyl-alpha-D-glucosamine biosynthesis; N-acetyl-alpha-D-glucosamine 1-phosphate from alpha-D-glucosamine 6-phosphate (route II): step 2/2. It participates in nucleotide-sugar biosynthesis; UDP-N-acetyl-alpha-D-glucosamine biosynthesis; UDP-N-acetyl-alpha-D-glucosamine from N-acetyl-alpha-D-glucosamine 1-phosphate: step 1/1. Its pathway is bacterial outer membrane biogenesis; LPS lipid A biosynthesis. In terms of biological role, catalyzes the last two sequential reactions in the de novo biosynthetic pathway for UDP-N-acetylglucosamine (UDP-GlcNAc). The C-terminal domain catalyzes the transfer of acetyl group from acetyl coenzyme A to glucosamine-1-phosphate (GlcN-1-P) to produce N-acetylglucosamine-1-phosphate (GlcNAc-1-P), which is converted into UDP-GlcNAc by the transfer of uridine 5-monophosphate (from uridine 5-triphosphate), a reaction catalyzed by the N-terminal domain. The chain is Bifunctional protein GlmU from Azorhizobium caulinodans (strain ATCC 43989 / DSM 5975 / JCM 20966 / LMG 6465 / NBRC 14845 / NCIMB 13405 / ORS 571).